A 270-amino-acid chain; its full sequence is Shikimate dehydrogenase (NADP(+)) (270 aa).

Shikimate is bound by residues 15-17 (SKS) and threonine 62. Catalysis depends on lysine 66, which acts as the Proton acceptor. Residues asparagine 87 and aspartate 102 each contribute to the shikimate site. NADP(+)-binding positions include 127 to 131 (GAGGA), 151 to 156 (NRTVAR), and methionine 214. Shikimate is bound at residue tyrosine 216. Glycine 238 serves as a coordination point for NADP(+).

It belongs to the shikimate dehydrogenase family. As to quaternary structure, homodimer.

The catalysed reaction is shikimate + NADP(+) = 3-dehydroshikimate + NADPH + H(+). It participates in metabolic intermediate biosynthesis; chorismate biosynthesis; chorismate from D-erythrose 4-phosphate and phosphoenolpyruvate: step 4/7. Involved in the biosynthesis of the chorismate, which leads to the biosynthesis of aromatic amino acids. Catalyzes the reversible NADPH linked reduction of 3-dehydroshikimate (DHSA) to yield shikimate (SA). In Alkalilimnicola ehrlichii (strain ATCC BAA-1101 / DSM 17681 / MLHE-1), this protein is Shikimate dehydrogenase (NADP(+)).